A 425-amino-acid chain; its full sequence is L-cysteine:1D-myo-inositol 2-amino-2-deoxy-alpha-D-glucopyranoside ligase (425 aa).

Residue Cys43 participates in Zn(2+) binding. Residues 43–46 (CGIT), Ser58, and 81–83 (NVT) each bind L-cysteinyl-5'-AMP. The 'HIGH' region signature appears at 45 to 55 (ITPYDATHMGH). The short motif at 199-204 (ERGGDP) is the 'ERGGDP' region element. Position 240 (Trp240) interacts with L-cysteinyl-5'-AMP. Cys244 contributes to the Zn(2+) binding site. An L-cysteinyl-5'-AMP-binding site is contributed by 262–264 (GSD). Residue His269 participates in Zn(2+) binding. Val295 is a binding site for L-cysteinyl-5'-AMP. The short motif at 301–305 (KMSKS) is the 'KMSKS' region element.

The protein belongs to the class-I aminoacyl-tRNA synthetase family. MshC subfamily. Monomer. It depends on Zn(2+) as a cofactor.

It catalyses the reaction 1D-myo-inositol 2-amino-2-deoxy-alpha-D-glucopyranoside + L-cysteine + ATP = 1D-myo-inositol 2-(L-cysteinylamino)-2-deoxy-alpha-D-glucopyranoside + AMP + diphosphate + H(+). Its function is as follows. Catalyzes the ATP-dependent condensation of GlcN-Ins and L-cysteine to form L-Cys-GlcN-Ins. This chain is L-cysteine:1D-myo-inositol 2-amino-2-deoxy-alpha-D-glucopyranoside ligase, found in Paenarthrobacter aurescens (strain TC1).